We begin with the raw amino-acid sequence, 100 residues long: Aspartyl/glutamyl-tRNA(Asn/Gln) amidotransferase subunit C (100 aa).

It belongs to the GatC family. Heterotrimer of A, B and C subunits.

The enzyme catalyses L-glutamyl-tRNA(Gln) + L-glutamine + ATP + H2O = L-glutaminyl-tRNA(Gln) + L-glutamate + ADP + phosphate + H(+). The catalysed reaction is L-aspartyl-tRNA(Asn) + L-glutamine + ATP + H2O = L-asparaginyl-tRNA(Asn) + L-glutamate + ADP + phosphate + 2 H(+). Its function is as follows. Allows the formation of correctly charged Asn-tRNA(Asn) or Gln-tRNA(Gln) through the transamidation of misacylated Asp-tRNA(Asn) or Glu-tRNA(Gln) in organisms which lack either or both of asparaginyl-tRNA or glutaminyl-tRNA synthetases. The reaction takes place in the presence of glutamine and ATP through an activated phospho-Asp-tRNA(Asn) or phospho-Glu-tRNA(Gln). The chain is Aspartyl/glutamyl-tRNA(Asn/Gln) amidotransferase subunit C from Staphylococcus carnosus (strain TM300).